The primary structure comprises 261 residues: Snake venom serine protease (261 aa).

The first 20 residues, 1–20 (MALIGVLANLLILCLSYART), serve as a signal peptide directing secretion. Positions 21–24 (APDR) are excised as a propeptide. A Peptidase S1 domain is found at 25 to 249 (IIGGLECNQN…YIDWIQDIMA (225 aa)). 6 disulfides stabilise this stretch: Cys31–Cys163, Cys50–Cys66, Cys98–Cys256, Cys142–Cys210, Cys174–Cys189, and Cys200–Cys225. His65 serves as the catalytic Charge relay system. N-linked (GlcNAc...) asparagine glycosylation is present at Asn103. Asp110 serves as the catalytic Charge relay system. N-linked (GlcNAc...) asparagine glycans are attached at residues Asn117 and Asn121. Ser204 (charge relay system) is an active-site residue.

The protein belongs to the peptidase S1 family. Snake venom subfamily. Monomer. In terms of tissue distribution, expressed by the venom gland.

The protein resides in the secreted. Snake venom serine protease that may act in the hemostasis system of the prey. This Philodryas olfersii (Green snake) protein is Snake venom serine protease.